The primary structure comprises 116 residues: Large ribosomal subunit protein bL19 (116 aa).

Belongs to the bacterial ribosomal protein bL19 family.

Its function is as follows. This protein is located at the 30S-50S ribosomal subunit interface and may play a role in the structure and function of the aminoacyl-tRNA binding site. This is Large ribosomal subunit protein bL19 from Histophilus somni (strain 129Pt) (Haemophilus somnus).